A 549-amino-acid polypeptide reads, in one-letter code: Manganese transporter SMF2 (549 aa).

The segment at 1–23 (MTSQEYEPIQWSDESQTNNDSVN) is disordered. Polar residues predominate over residues 12–22 (SDESQTNNDSV). The next 8 membrane-spanning stretches (helical) occupy residues 91 to 109 (LLFS…QYLC), 130 to 147 (FGLN…IIAT), 161 to 185 (ILFH…LLAY), 196 to 214 (IFEA…CFTV), 312 to 332 (LLIS…IVSG), 350 to 372 (IYNL…ALLF), 432 to 452 (ASQV…LYFT), and 521 to 541 (VLAI…LLGF).

This sequence belongs to the NRAMP family.

Its subcellular location is the vacuole lumen. It localises to the vesicle. It is found in the cell membrane. It carries out the reaction Mn(2+)(in) = Mn(2+)(out). High-affinity manganese transporter involved in manganese uptake from the extracellular environment. The protein is Manganese transporter SMF2 (SMF2) of Saccharomyces cerevisiae (strain ATCC 204508 / S288c) (Baker's yeast).